The primary structure comprises 338 residues: Holliday junction branch migration complex subunit RuvB (338 aa).

Residues 1 to 181 are large ATPase domain (RuvB-L); it reads MTTRTISPEK…FGVISRLEFY (181 aa). ATP-binding positions include Leu-20, Arg-21, Gly-62, Lys-65, Thr-66, Thr-67, 128–130, Arg-171, Tyr-181, and Arg-218; that span reads EDF. Residue Thr-66 participates in Mg(2+) binding. Residues 182–252 form a small ATPAse domain (RuvB-S) region; sequence TDAELSTIVT…VVDESLKLLE (71 aa). A head domain (RuvB-H) region spans residues 255 to 338; the sequence is EKGFDQMDRT…APAPGQGALF (84 aa). 3 residues coordinate DNA: Arg-291, Arg-310, and Arg-315.

The protein belongs to the RuvB family. As to quaternary structure, homohexamer. Forms an RuvA(8)-RuvB(12)-Holliday junction (HJ) complex. HJ DNA is sandwiched between 2 RuvA tetramers; dsDNA enters through RuvA and exits via RuvB. An RuvB hexamer assembles on each DNA strand where it exits the tetramer. Each RuvB hexamer is contacted by two RuvA subunits (via domain III) on 2 adjacent RuvB subunits; this complex drives branch migration. In the full resolvosome a probable DNA-RuvA(4)-RuvB(12)-RuvC(2) complex forms which resolves the HJ.

It is found in the cytoplasm. It catalyses the reaction ATP + H2O = ADP + phosphate + H(+). In terms of biological role, the RuvA-RuvB-RuvC complex processes Holliday junction (HJ) DNA during genetic recombination and DNA repair, while the RuvA-RuvB complex plays an important role in the rescue of blocked DNA replication forks via replication fork reversal (RFR). RuvA specifically binds to HJ cruciform DNA, conferring on it an open structure. The RuvB hexamer acts as an ATP-dependent pump, pulling dsDNA into and through the RuvAB complex. RuvB forms 2 homohexamers on either side of HJ DNA bound by 1 or 2 RuvA tetramers; 4 subunits per hexamer contact DNA at a time. Coordinated motions by a converter formed by DNA-disengaged RuvB subunits stimulates ATP hydrolysis and nucleotide exchange. Immobilization of the converter enables RuvB to convert the ATP-contained energy into a lever motion, pulling 2 nucleotides of DNA out of the RuvA tetramer per ATP hydrolyzed, thus driving DNA branch migration. The RuvB motors rotate together with the DNA substrate, which together with the progressing nucleotide cycle form the mechanistic basis for DNA recombination by continuous HJ branch migration. Branch migration allows RuvC to scan DNA until it finds its consensus sequence, where it cleaves and resolves cruciform DNA. This chain is Holliday junction branch migration complex subunit RuvB, found in Geobacter sulfurreducens (strain ATCC 51573 / DSM 12127 / PCA).